Here is a 112-residue protein sequence, read N- to C-terminus: Putative pterin-4-alpha-carbinolamine dehydratase (112 aa).

Positions 1-30 (MSDELQSRTCTPCRGDVPPMTKAEAKRQLA) are disordered.

It belongs to the pterin-4-alpha-carbinolamine dehydratase family.

The enzyme catalyses (4aS,6R)-4a-hydroxy-L-erythro-5,6,7,8-tetrahydrobiopterin = (6R)-L-erythro-6,7-dihydrobiopterin + H2O. The sequence is that of Putative pterin-4-alpha-carbinolamine dehydratase from Aromatoleum aromaticum (strain DSM 19018 / LMG 30748 / EbN1) (Azoarcus sp. (strain EbN1)).